The sequence spans 667 residues: Small ribosomal subunit protein mS39 (667 aa).

A mitochondrion-targeting transit peptide spans M1–H11. A disordered region spans residues E199–D226. 6 PPR repeats span residues N249–A283, D284–P323, N324–P360, S361–P400, S482–N516, and T565–P599.

Belongs to the mitochondrion-specific ribosomal protein mS39 family.

It localises to the mitochondrion. Its function is as follows. Mitochondrial RNA-binding protein that may have a role in mitochondrial translation. The protein is Small ribosomal subunit protein mS39 (ptcd3) of Danio rerio (Zebrafish).